The sequence spans 78 residues: MNLAQKCLVGAIRVYQLALSPWLGRQCRYLPTCSEYGKEAIEKHGALKGSWLAAKRIGRCRPGCSHGYDPVPPVDPRK.

It belongs to the UPF0161 family.

Its subcellular location is the cell inner membrane. Could be involved in insertion of integral membrane proteins into the membrane. This is Putative membrane protein insertion efficiency factor from Thiobacillus denitrificans (strain ATCC 25259 / T1).